The primary structure comprises 351 residues: Columbamine O-methyltransferase (351 aa).

S-adenosyl-L-methionine is bound by residues glycine 198, aspartate 221, aspartate 241, methionine 242, and lysine 255. Residue histidine 259 is the Proton acceptor of the active site.

It belongs to the class I-like SAM-binding methyltransferase superfamily. Cation-independent O-methyltransferase family. COMT subfamily. As to quaternary structure, homodimer.

It catalyses the reaction columbamine + S-adenosyl-L-methionine = palmatine + S-adenosyl-L-homocysteine + H(+). It carries out the reaction (S)-tetrahydrocolumbamine + S-adenosyl-L-methionine = (S)-tetrahydropalmatine + S-adenosyl-L-homocysteine + H(+). It functions in the pathway alkaloid biosynthesis; palmatine biosynthesis; palmatine from columbamine: step 1/1. Catalyzes the conversion of tetrahydrocolumbamine to (S)-tetrahydropalmatine and of columbamine to palmatine, an isoquinoline alkaloid. The protein is Columbamine O-methyltransferase of Coptis japonica (Japanese goldthread).